A 221-amino-acid polypeptide reads, in one-letter code: HP1-HOAP-interacting protein (221 aa).

Residues 69 to 113 (NAKRHKMARETAASITDVSGSQSSSHQSAPSLHVSGQSSEFGASY) are disordered. Over residues 86–103 (VSGSQSSSHQSAPSLHVS) the composition is skewed to low complexity.

Component of the HipHop-HOAP telomere-capping complex, composed of at least HipHop and cav/HOAP, and may include Su(var)205/HP1; HipHop and cav/HOAP, but not Su(var)205, are interdependent for their protein stability. Interacts (via N-terminus) with cav/HOAP and Su(var)205/HP1. The HipHop-HOAP complex recruits the MTV complex, consisting of moi/modigliani, tea and ver/verrocchio, to telomeres to form the terminin telomere-capping complex.

The protein resides in the nucleus. The protein localises to the chromosome. It localises to the telomere. Part of the HipHop-HOAP complex that recruits the MTV complex to form the terminin telomere-capping complex, which binds to chromosome ends in a sequence-independent manner and prevents telomere fusion. This Drosophila melanogaster (Fruit fly) protein is HP1-HOAP-interacting protein.